A 74-amino-acid chain; its full sequence is Translation initiation factor IF-1 (74 aa).

An S1-like domain is found at 1 to 72 (MSKEDAIEVE…NKGRITYRLK (72 aa)).

This sequence belongs to the IF-1 family. Component of the 30S ribosomal translation pre-initiation complex which assembles on the 30S ribosome in the order IF-2 and IF-3, IF-1 and N-formylmethionyl-tRNA(fMet); mRNA recruitment can occur at any time during PIC assembly.

It is found in the cytoplasm. Functionally, one of the essential components for the initiation of protein synthesis. Stabilizes the binding of IF-2 and IF-3 on the 30S subunit to which N-formylmethionyl-tRNA(fMet) subsequently binds. Helps modulate mRNA selection, yielding the 30S pre-initiation complex (PIC). Upon addition of the 50S ribosomal subunit IF-1, IF-2 and IF-3 are released leaving the mature 70S translation initiation complex. The polypeptide is Translation initiation factor IF-1 (Synechococcus sp. (strain JA-3-3Ab) (Cyanobacteria bacterium Yellowstone A-Prime)).